The primary structure comprises 37 residues: Cytochrome b6-f complex subunit 5 (37 aa).

A helical transmembrane segment spans residues 5–25 (LLCGIVLGLIPVTLAGLFFAA).

Belongs to the PetG family. In terms of assembly, the 4 large subunits of the cytochrome b6-f complex are cytochrome b6, subunit IV (17 kDa polypeptide, PetD), cytochrome f and the Rieske protein, while the 4 small subunits are PetG, PetL, PetM and PetN. The complex functions as a dimer.

Its subcellular location is the cellular thylakoid membrane. Component of the cytochrome b6-f complex, which mediates electron transfer between photosystem II (PSII) and photosystem I (PSI), cyclic electron flow around PSI, and state transitions. PetG is required for either the stability or assembly of the cytochrome b6-f complex. The protein is Cytochrome b6-f complex subunit 5 of Thermosynechococcus vestitus (strain NIES-2133 / IAM M-273 / BP-1).